A 523-amino-acid polypeptide reads, in one-letter code: GMP synthase [glutamine-hydrolyzing] (523 aa).

In terms of domain architecture, Glutamine amidotransferase type-1 spans 8–205 (KILILDFGSQ…VVNICGCETK (198 aa)). Cysteine 85 functions as the Nucleophile in the catalytic mechanism. Catalysis depends on residues histidine 179 and glutamate 181. The region spanning 206 to 398 (WTAENIIEDA…LGLPAEMINR (193 aa)) is the GMPS ATP-PPase domain. 233–239 (SGGVDSS) provides a ligand contact to ATP.

In terms of assembly, homodimer.

It carries out the reaction XMP + L-glutamine + ATP + H2O = GMP + L-glutamate + AMP + diphosphate + 2 H(+). It functions in the pathway purine metabolism; GMP biosynthesis; GMP from XMP (L-Gln route): step 1/1. In terms of biological role, catalyzes the synthesis of GMP from XMP. The sequence is that of GMP synthase [glutamine-hydrolyzing] from Haemophilus influenzae (strain PittEE).